Reading from the N-terminus, the 131-residue chain is Small ribosomal subunit protein uS8 (131 aa).

The protein belongs to the universal ribosomal protein uS8 family. As to quaternary structure, part of the 30S ribosomal subunit. Contacts proteins S5 and S12.

Functionally, one of the primary rRNA binding proteins, it binds directly to 16S rRNA central domain where it helps coordinate assembly of the platform of the 30S subunit. In Chlorobium limicola (strain DSM 245 / NBRC 103803 / 6330), this protein is Small ribosomal subunit protein uS8.